Consider the following 476-residue polypeptide: Acidic leucine-rich nuclear phosphoprotein 32-related protein 1 (476 aa).

3 LRR repeats span residues 51–72 (SLEH…PRLR), 73–92 (NLTR…DHLV), and 98–119 (SLRD…SPLA). The LRRCT domain maps to 131–169 (CPVTRVKDYRSKVFGMIRTLKYLDKMDADENERPESDDD). The interval 157–476 (DADENERPES…VEDLRPFKHH (320 aa)) is disordered. 8 stretches are compositionally biased toward acidic residues: residues 165–194 (ESDD…EDPG), 222–232 (DVDEDESDADE), 252–289 (GDED…EDAV), 299–329 (SDEE…EAEP), 353–371 (EGED…EERL), 379–396 (EGND…EDTE), 415–436 (DAAE…DDGG), and 458–467 (GDDDEDDDGV).

This sequence belongs to the ANP32 family.

The protein is Acidic leucine-rich nuclear phosphoprotein 32-related protein 1 of Oryza sativa subsp. japonica (Rice).